A 596-amino-acid chain; its full sequence is Ferredoxin--nitrite reductase, chloroplastic (596 aa).

A chloroplast-targeting transit peptide spans 1–28 (MASSASLQRFLPPYPHAAASRCRPPGVR). Residues 1 to 56 (MASSASLQRFLPPYPHAAASRCRPPGVRARPVQSSTVSAPSSSTPAADEAVSAERL) are disordered. The segment covering 31–47 (PVQSSTVSAPSSSTPAA) has biased composition (low complexity). The [4Fe-4S] cluster site is built by Cys-474, Cys-480, Cys-515, and Cys-519. Cys-519 is a siroheme binding site.

It belongs to the nitrite and sulfite reductase 4Fe-4S domain family. As to quaternary structure, monomer. It depends on siroheme as a cofactor. Requires [4Fe-4S] cluster as cofactor.

Its subcellular location is the plastid. The protein resides in the chloroplast. It carries out the reaction 6 oxidized [2Fe-2S]-[ferredoxin] + NH4(+) + 2 H2O = nitrite + 6 reduced [2Fe-2S]-[ferredoxin] + 8 H(+). Its pathway is nitrogen metabolism; nitrate reduction (assimilation). Functionally, catalyzes the six-electron reduction of nitrite to ammonium. The chain is Ferredoxin--nitrite reductase, chloroplastic from Oryza sativa subsp. japonica (Rice).